The chain runs to 327 residues: L-lactate dehydrogenase (327 aa).

Residues Val18, Asp39, Lys44, Tyr69, and 83-84 (GA) each bind NAD(+). Substrate contacts are provided by residues Gln86, Arg92, and 124-127 (NPVD). NAD(+)-binding positions include 122–124 (AAN) and Ser147. 152–155 (DSAR) lines the substrate pocket. Beta-D-fructose 1,6-bisphosphate contacts are provided by Arg157 and His172. Catalysis depends on His179, which acts as the Proton acceptor. Phosphotyrosine is present on Tyr224. Thr233 contributes to the substrate binding site.

It belongs to the LDH/MDH superfamily. LDH family. As to quaternary structure, homotetramer.

The protein localises to the cytoplasm. The enzyme catalyses (S)-lactate + NAD(+) = pyruvate + NADH + H(+). The protein operates within fermentation; pyruvate fermentation to lactate; (S)-lactate from pyruvate: step 1/1. With respect to regulation, allosterically activated by fructose 1,6-bisphosphate (FBP). Functionally, catalyzes the conversion of lactate to pyruvate. The polypeptide is L-lactate dehydrogenase (Streptococcus uberis (strain ATCC BAA-854 / 0140J)).